We begin with the raw amino-acid sequence, 415 residues long: CCA-adding enzyme (415 aa).

Positions 52 and 55 each coordinate ATP. CTP is bound by residues Ser52 and Arg55. The Mg(2+) site is built by Asp64, Asp66, and Asp116. Residues His139, Lys159, and Tyr168 each coordinate ATP. 3 residues coordinate CTP: His139, Lys159, and Tyr168.

The protein belongs to the tRNA nucleotidyltransferase/poly(A) polymerase family. Archaeal CCA-adding enzyme subfamily. As to quaternary structure, homodimer. It depends on Mg(2+) as a cofactor.

The enzyme catalyses a tRNA precursor + 2 CTP + ATP = a tRNA with a 3' CCA end + 3 diphosphate. It catalyses the reaction a tRNA with a 3' CCA end + 2 CTP + ATP = a tRNA with a 3' CCACCA end + 3 diphosphate. Functionally, catalyzes the addition and repair of the essential 3'-terminal CCA sequence in tRNAs without using a nucleic acid template. Adds these three nucleotides in the order of C, C, and A to the tRNA nucleotide-73, using CTP and ATP as substrates and producing inorganic pyrophosphate. tRNA 3'-terminal CCA addition is required both for tRNA processing and repair. Also involved in tRNA surveillance by mediating tandem CCA addition to generate a CCACCA at the 3' terminus of unstable tRNAs. While stable tRNAs receive only 3'-terminal CCA, unstable tRNAs are marked with CCACCA and rapidly degraded. This chain is CCA-adding enzyme, found in Pyrobaculum neutrophilum (strain DSM 2338 / JCM 9278 / NBRC 100436 / V24Sta) (Thermoproteus neutrophilus).